Here is a 331-residue protein sequence, read N- to C-terminus: Phosphatidylinositol transfer protein 4 (331 aa).

Belongs to the PtdIns transfer protein family. PI transfer class IIA subfamily.

Catalyzes the transfer of PtdIns and phosphatidylcholine between membranes. The chain is Phosphatidylinositol transfer protein 4 (pitD) from Dictyostelium discoideum (Social amoeba).